The chain runs to 401 residues: Mu-type opioid receptor (401 aa).

The Extracellular segment spans residues 1 to 69; that stretch reads MDSGAVPTNA…CPSAGSPSMI (69 aa). 5 N-linked (GlcNAc...) asparagine glycosylation sites follow: Asn-9, Asn-12, Asn-34, Asn-41, and Asn-49. A helical transmembrane segment spans residues 70–94; sequence TAIIIMALYSIVCVVGLFGNFLVMY. Residues 95 to 107 are Cytoplasmic-facing; that stretch reads VIVRYTKMKTATN. Residues 108–132 traverse the membrane as a helical segment; that stretch reads IYIFNLALADALATSTLPFQSVNYL. At 133-143 the chain is on the extracellular side; it reads MGTWPFGTILC. Residues Cys-143 and Cys-220 are joined by a disulfide bond. Residues 144–166 traverse the membrane as a helical segment; the sequence is KIVISIDYYNMFTSIFTLCTMSV. Residues 167-186 are Cytoplasmic-facing; that stretch reads DRYIAVCHPVKALDLRTPRN. The residue at position 169 (Tyr-169) is a Phosphotyrosine. A helical membrane pass occupies residues 187–208; sequence AKIINICNWILSSAIGLPVMFM. Topologically, residues 209–231 are extracellular; it reads ATTKYRQGSIDCTLTFSHPTWYW. Residues 232-256 traverse the membrane as a helical segment; the sequence is ENLLKICVFIFAFIMPILIITVCYG. The Cytoplasmic portion of the chain corresponds to 257 to 280; the sequence is LMILRLKSVRMLSGSKEKDRNLRR. A helical membrane pass occupies residues 281-307; it reads ITRMVLVVVAVFIVCWTPIHIYVIIKA. Residues 308–315 lie on the Extracellular side of the membrane; sequence LITIPETT. The chain crosses the membrane as a helical span at residues 316–339; the sequence is FQTVSWHFCIALGYTNSCLNPVLY. An NPxxY; plays a role in stabilizing the activated conformation of the receptor motif is present at residues 335–339; it reads NPVLY. Residues 340-401 lie on the Cytoplasmic side of the membrane; the sequence is AFLDENFKRC…NLEAETTPLP (62 aa). Residue Cys-354 is the site of S-palmitoyl cysteine attachment. Residues 365–389 form a disordered region; sequence NSTRIRQNTRDHPSTANTVDRTNHQ. The residue at position 366 (Ser-366) is a Phosphoserine. Thr-373 carries the phosphothreonine modification. A Phosphoserine modification is found at Ser-378. Position 397 is a phosphothreonine (Thr-397).

Belongs to the G-protein coupled receptor 1 family. Forms homooligomers and heterooligomers with other GPCRs, such as OPRD1, OPRK1, OPRL1, NPFFR2, ADRA2A, SSTR2, CNR1 and CCR5 (probably in dimeric forms). Interacts with heterotrimeric G proteins; interaction with a heterotrimeric complex containing GNAI1, GNB1 and GNG2 stabilizes the active conformation of the receptor and increases its affinity for endomorphin-2, the synthetic opioid peptide DAMGO and for morphinan agonists. Interacts with PPL; the interaction disrupts agonist-mediated G-protein activation. Interacts (via C-terminus) with DNAJB4 (via C-terminus). Interacts with calmodulin; the interaction inhibits the constitutive activity of OPRM1; it abolishes basal and attenuates agonist-stimulated G-protein coupling. Interacts with FLNA, PLD2, RANBP9 and WLS and GPM6A. Interacts with RTP4. Interacts with SYP and GNAS. Interacts with RGS9, RGS17, RGS20, RGS4, PPP1R9B and HINT1. Post-translationally, phosphorylated. Differentially phosphorylated in basal and agonist-induced conditions. Agonist-mediated phosphorylation modulates receptor internalization. Phosphorylated by GRK2 in a agonist-dependent manner. Phosphorylation at Tyr-169 requires receptor activation, is dependent on non-receptor protein tyrosine kinase Src and results in a decrease in agonist efficacy by reducing G-protein coupling efficiency. Phosphorylated on tyrosine residues; the phosphorylation is involved in agonist-induced G-protein-independent receptor down-regulation. Phosphorylation at Ser-378 is involved in G-protein-dependent but not beta-arrestin-dependent activation of the ERK pathway. In terms of processing, ubiquitinated. A basal ubiquitination seems not to be related to degradation. Ubiquitination is increased upon formation of OPRM1:OPRD1 oligomers leading to proteasomal degradation; the ubiquitination is diminished by RTP4.

The protein resides in the cell membrane. The protein localises to the cell projection. It is found in the axon. It localises to the perikaryon. Its subcellular location is the dendrite. The protein resides in the endosome. In terms of biological role, receptor for endogenous opioids such as beta-endorphin and endomorphin. Receptor for natural and synthetic opioids including morphine, heroin, DAMGO, fentanyl, etorphine, buprenorphin and methadone. Also activated by enkephalin peptides, such as Met-enkephalin or Met-enkephalin-Arg-Phe, with higher affinity for Met-enkephalin-Arg-Phe. Agonist binding to the receptor induces coupling to an inactive GDP-bound heterotrimeric G-protein complex and subsequent exchange of GDP for GTP in the G-protein alpha subunit leading to dissociation of the G-protein complex with the free GTP-bound G-protein alpha and the G-protein beta-gamma dimer activating downstream cellular effectors. The agonist- and cell type-specific activity is predominantly coupled to pertussis toxin-sensitive G(i) and G(o) G alpha proteins, GNAI1, GNAI2, GNAI3 and GNAO1, and to a lesser extent to pertussis toxin-insensitive G alpha proteins GNAZ and GNA15. They mediate an array of downstream cellular responses, including inhibition of adenylate cyclase activity and both N-type and L-type calcium channels, activation of inward rectifying potassium channels, mitogen-activated protein kinase (MAPK), phospholipase C (PLC), phosphoinositide/protein kinase (PKC), phosphoinositide 3-kinase (PI3K) and regulation of NF-kappa-B. Also couples to adenylate cyclase stimulatory G alpha proteins. The selective temporal coupling to G-proteins and subsequent signaling can be regulated by RGSZ proteins, such as RGS9, RGS17 and RGS4. Phosphorylation by members of the GPRK subfamily of Ser/Thr protein kinases and association with beta-arrestins is involved in short-term receptor desensitization. Beta-arrestins associate with the GPRK-phosphorylated receptor and uncouple it from the G-protein thus terminating signal transduction. The phosphorylated receptor is internalized through endocytosis via clathrin-coated pits which involves beta-arrestins. The activation of the ERK pathway occurs either in a G-protein-dependent or a beta-arrestin-dependent manner and is regulated by agonist-specific receptor phosphorylation. Acts as a class A G-protein coupled receptor (GPCR) which dissociates from beta-arrestin at or near the plasma membrane and undergoes rapid recycling. Receptor down-regulation pathways are varying with the agonist and occur dependent or independent of G-protein coupling. Endogenous ligands induce rapid desensitization, endocytosis and recycling. Heterooligomerization with other GPCRs can modulate agonist binding, signaling and trafficking properties. Involved in neurogenesis. The protein is Mu-type opioid receptor (OPRM1) of Bos taurus (Bovine).